Reading from the N-terminus, the 249-residue chain is 2,3-bisphosphoglycerate-dependent phosphoglycerate mutase (249 aa).

Residues 8 to 15 (RHGESQWN), 21 to 22 (TG), Arg60, 87 to 90 (ERHY), Lys98, 114 to 115 (RR), and 183 to 184 (GN) contribute to the substrate site. The active-site Tele-phosphohistidine intermediate is the His9. Residue Glu87 is the Proton donor/acceptor of the active site.

It belongs to the phosphoglycerate mutase family. BPG-dependent PGAM subfamily.

It catalyses the reaction (2R)-2-phosphoglycerate = (2R)-3-phosphoglycerate. It functions in the pathway carbohydrate degradation; glycolysis; pyruvate from D-glyceraldehyde 3-phosphate: step 3/5. Its function is as follows. Catalyzes the interconversion of 2-phosphoglycerate and 3-phosphoglycerate. In Pelodictyon phaeoclathratiforme (strain DSM 5477 / BU-1), this protein is 2,3-bisphosphoglycerate-dependent phosphoglycerate mutase.